Here is a 174-residue protein sequence, read N- to C-terminus: ATP synthase subunit delta (174 aa).

It belongs to the ATPase delta chain family. As to quaternary structure, F-type ATPases have 2 components, F(1) - the catalytic core - and F(0) - the membrane proton channel. F(1) has five subunits: alpha(3), beta(3), gamma(1), delta(1), epsilon(1). F(0) has three main subunits: a(1), b(2) and c(10-14). The alpha and beta chains form an alternating ring which encloses part of the gamma chain. F(1) is attached to F(0) by a central stalk formed by the gamma and epsilon chains, while a peripheral stalk is formed by the delta and b chains.

The protein localises to the cell inner membrane. In terms of biological role, f(1)F(0) ATP synthase produces ATP from ADP in the presence of a proton or sodium gradient. F-type ATPases consist of two structural domains, F(1) containing the extramembraneous catalytic core and F(0) containing the membrane proton channel, linked together by a central stalk and a peripheral stalk. During catalysis, ATP synthesis in the catalytic domain of F(1) is coupled via a rotary mechanism of the central stalk subunits to proton translocation. This protein is part of the stalk that links CF(0) to CF(1). It either transmits conformational changes from CF(0) to CF(1) or is implicated in proton conduction. The sequence is that of ATP synthase subunit delta from Francisella tularensis subsp. mediasiatica (strain FSC147).